We begin with the raw amino-acid sequence, 520 residues long: N-acetylgalactosamine-6-sulfatase (520 aa).

Residues 1-23 (MAACTAAQQLLLVLSALGLLAAG) form the signal peptide. A catalytic domain region spans residues 24–377 (APQPPNIVLL…PTMLKGQMMD (354 aa)). D36, D37, and C76 together coordinate Ca(2+). C76 serves as the catalytic Nucleophile. C76 is subject to 3-oxoalanine (Cys). The active site involves H139. A glycan (N-linked (GlcNAc...) asparagine) is linked at N201. Ca(2+) is bound by residues D286 and N287. The cysteines at positions 306 and 417 are disulfide-linked. A glycan (N-linked (GlcNAc...) asparagine) is linked at N421. Disulfide bonds link C487–C516 and C499–C505.

Belongs to the sulfatase family. Homodimer. Ca(2+) serves as cofactor. The conversion to 3-oxoalanine (also known as C-formylglycine, FGly), of a serine or cysteine residue in prokaryotes and of a cysteine residue in eukaryotes, is critical for catalytic activity. Widely expressed. Higher expression in liver and kidney.

The protein resides in the lysosome. It catalyses the reaction Hydrolysis of the 6-sulfate groups of the N-acetyl-D-galactosamine 6-sulfate units of chondroitin sulfate and of the D-galactose 6-sulfate units of keratan sulfate.. This is N-acetylgalactosamine-6-sulfatase (Galns) from Mus musculus (Mouse).